The following is a 1575-amino-acid chain: Ovochymase (1575 aa).

The signal sequence occupies residues 1 to 19; it reads MIVTFVALALSCCTPQVTA. The 245-residue stretch at 36–280 folds into the Peptidase S1 1 domain; it reads IVGGEMAKLG…YSSWIANYTQ (245 aa). C61 and C77 form a disulfide bridge. Catalysis depends on charge relay system residues H76 and D132. Cystine bridges form between C166–C233, C199–C212, and C223–C256. The active-site Charge relay system is S227. N-linked (GlcNAc...) asparagine glycans are attached at residues N277 and N303. 4 cysteine pairs are disulfide-bonded: C300–C330, C358–C386, C432–C460, and C486–C507. CUB domains are found at residues 300–423 and 432–545; these read CSSN…FHAV and CGGI…YYFS. N497, N513, and N549 each carry an N-linked (GlcNAc...) asparagine glycan. One can recognise a Peptidase S1 2 domain in the interval 575–810; that stretch reads IVNGDIAIAG…YIDWIIATAN (236 aa). C602 and C618 are disulfide-bonded. Catalysis depends on charge relay system residues H617 and D665. Disulfide bonds link C700/C766, C730/C745, and C756/C786. N748 carries N-linked (GlcNAc...) asparagine glycosylation. S760 functions as the Charge relay system in the catalytic mechanism. The N-linked (GlcNAc...) asparagine glycan is linked to N810. Disulfide bonds link C830-C859, C889-C913, C956-C984, C1012-C1034, C1080-C1108, C1135-C1158, and C1221-C1246. 4 consecutive CUB domains span residues 830–949, 956–1070, 1080–1197, and 1221–1341; these read CIQL…YRLE, CGQL…FVEL, CGGV…YTAV, and CQDS…YKLM. Residues N968, N1027, N1087, and N1090 are each glycosylated (N-linked (GlcNAc...) asparagine). The N-linked (GlcNAc...) asparagine glycan is linked to N1273. The Peptidase S1 3 domain maps to 1314 to 1575; that stretch reads YNGGEISMLF…FLKWITKIIQ (262 aa). Cystine bridges form between C1376-C1392 and C1493-C1507. A glycan (N-linked (GlcNAc...) asparagine) is linked at N1511.

This sequence belongs to the peptidase S1 family. In terms of tissue distribution, expressed in the testis and ovary. Expressed in the gonads and gametes. Expressed in the follicle cells covering the vitelline coat of ovarian egg.

The protein localises to the secreted. In terms of biological role, may be responsible for elevation of the vitelline coat at the late developmental stage of oogenesis and during fertilization in ovarian eggs. This chain is Ovochymase, found in Halocynthia roretzi (Sea squirt).